The chain runs to 339 residues: Adenosine deaminase (339 aa).

Positions 15 and 17 each coordinate Zn(2+). Substrate is bound by residues His-17, Asp-19, and Gly-172. His-199 provides a ligand contact to Zn(2+). The active-site Proton donor is the Glu-202. Asp-279 lines the Zn(2+) pocket.

The protein belongs to the metallo-dependent hydrolases superfamily. Adenosine and AMP deaminases family. Adenosine deaminase subfamily. The cofactor is Zn(2+).

It catalyses the reaction adenosine + H2O + H(+) = inosine + NH4(+). The enzyme catalyses 2'-deoxyadenosine + H2O + H(+) = 2'-deoxyinosine + NH4(+). Functionally, catalyzes the hydrolytic deamination of adenosine and 2-deoxyadenosine. The protein is Adenosine deaminase of Lacticaseibacillus paracasei (strain ATCC 334 / BCRC 17002 / CCUG 31169 / CIP 107868 / KCTC 3260 / NRRL B-441) (Lactobacillus paracasei).